Reading from the N-terminus, the 339-residue chain is Phosphoribosylformylglycinamidine cyclo-ligase (339 aa).

The protein belongs to the AIR synthase family.

Its subcellular location is the cytoplasm. It carries out the reaction 2-formamido-N(1)-(5-O-phospho-beta-D-ribosyl)acetamidine + ATP = 5-amino-1-(5-phospho-beta-D-ribosyl)imidazole + ADP + phosphate + H(+). Its pathway is purine metabolism; IMP biosynthesis via de novo pathway; 5-amino-1-(5-phospho-D-ribosyl)imidazole from N(2)-formyl-N(1)-(5-phospho-D-ribosyl)glycinamide: step 2/2. This is Phosphoribosylformylglycinamidine cyclo-ligase from Streptococcus thermophilus (strain ATCC BAA-250 / LMG 18311).